The primary structure comprises 404 residues: Sorting nexin-5 (404 aa).

Alanine 2 is modified (N-acetylalanine). Residues 25-172 enclose the PX domain; it reads LNVDPSLQID…HVFLEYDQDL (148 aa). A 1,2-diacyl-sn-glycero-3-phospho-(1D-myo-inositol-4,5-bisphosphate)-binding positions include 40–46, 99–105, and 113–116; these read SERDKVK, FDGPREK, and EGSM. The segment at 169–261 is interaction with DOCK1; it reads DQDLSVRRKN…HSLALEEPTV (93 aa). Residues 183-200 are membrane-binding amphipathic helix; sequence FGGFFKSVVKSADEVLFS. Serine 193 carries the phosphoserine modification. The BAR domain maps to 202–404; that stretch reads VKEVDDFFEQ…QSCIDLFKNN (203 aa). Lysine 275 bears the N6-acetyllysine mark.

This sequence belongs to the sorting nexin family. Forms heterodimers with BAR domain-containing sorting nexins SNX1 and SNX2; does not homodimerize. The heterodimers are proposed to self-assemble into helical arrays on the membrane to stabilize and expand local membrane curvature underlying endosomal tubule formation. Thought to be a component of the originally described retromer complex (also called SNX-BAR retromer) which is a pentamer containing the heterotrimeric retromer cargo-selective complex (CSC), also described as vacuolar protein sorting subcomplex (VPS), and a heterodimeric membrane-deforming subcomplex formed between SNX1 or SNX2 and SNX5 or SNX6 (also called SNX-BAR subcomplex); the respective CSC and SNX-BAR subcomplexes associate with low affinity. Interacts with SNX1, SNX2, VPS26A, VPS29, VPS35, DCTN1, DOCK1, MIB1, PIP5K1C. Interacts with HGS; increased by PIP5K1C kinase activity and by PtdIns(3P) and/or PtdIns(3,4)P2.

It is found in the endosome. It localises to the early endosome. The protein resides in the early endosome membrane. Its subcellular location is the cell membrane. The protein localises to the cytoplasmic vesicle membrane. It is found in the cytoplasm. It localises to the cell projection. The protein resides in the phagocytic cup. Its subcellular location is the ruffle. Functionally, involved in several stages of intracellular trafficking. Interacts with membranes containing phosphatidylinositol lipids. Acts in part as component of the retromer membrane-deforming SNX-BAR subcomplex. The SNX-BAR retromer mediates retrograde transport of cargo proteins from endosomes to the trans-Golgi network (TGN) and is involved in endosome-to-plasma membrane transport for cargo protein recycling. The SNX-BAR subcomplex functions to deform the donor membrane into a tubular profile called endosome-to-TGN transport carrier (ETC). Does not have in vitro vesicle-to-membrane remodeling activity. Involved in retrograde transport of lysosomal enzyme receptor IGF2R. May function as link between endosomal transport vesicles and dynactin. Plays a role in the internalization of EGFR after EGF stimulation. Involved in EGFR endosomal sorting and degradation; the function involves PIP5K1C and is retromer-independent. Together with PIP5K1C facilitates HGS interaction with ubiquitinated EGFR, which initiates EGFR sorting to intraluminal vesicles (ILVs) of the multivesicular body for subsequent lysosomal degradation. Involved in E-cadherin sorting and degradation; inhibits PIP5K1C-mediated E-cadherin degradation. Plays a role in macropinocytosis. This Rattus norvegicus (Rat) protein is Sorting nexin-5 (Snx5).